A 72-amino-acid chain; its full sequence is Beta-defensin 104A (72 aa).

Positions 1-22 (MRRLVLLLAISLLLYQDLPVRS) are cleaved as a signal peptide. Cystine bridges form between Cys-30–Cys-57, Cys-37–Cys-51, and Cys-41–Cys-58.

This sequence belongs to the beta-defensin family.

It is found in the secreted. Functionally, has antimicrobial activity. The polypeptide is Beta-defensin 104A (DEFB104A) (Gorilla gorilla gorilla (Western lowland gorilla)).